The primary structure comprises 107 residues: Iron-binding protein IscA (107 aa).

Fe cation is bound by residues Cys35, Cys99, and Cys101.

This sequence belongs to the HesB/IscA family. Homodimer; may form tetramers and higher multimers. It depends on Fe cation as a cofactor.

Functionally, is able to transfer iron-sulfur clusters to apo-ferredoxin. Multiple cycles of [2Fe2S] cluster formation and transfer are observed, suggesting that IscA acts catalytically. Recruits intracellular free iron so as to provide iron for the assembly of transient iron-sulfur cluster in IscU in the presence of IscS, L-cysteine and the thioredoxin reductase system TrxA/TrxB. This is Iron-binding protein IscA from Pectobacterium atrosepticum (strain SCRI 1043 / ATCC BAA-672) (Erwinia carotovora subsp. atroseptica).